A 63-amino-acid chain; its full sequence is Large ribosomal subunit protein bL32 (63 aa).

Positions 1–22 (MANPKAKMSKSRRDKRRAQFNA) are disordered. Residues 7 to 18 (KMSKSRRDKRRA) are compositionally biased toward basic residues.

This sequence belongs to the bacterial ribosomal protein bL32 family.

The polypeptide is Large ribosomal subunit protein bL32 (Chlorobium limicola (strain DSM 245 / NBRC 103803 / 6330)).